Reading from the N-terminus, the 366-residue chain is MSNYKLLTPGPLTTTKTVKQEMLKDRCTWDDDYKNVTQVIRKQLLNLAQVDEPHYTAVLMQGSGSFVVESVLTTAVGEDDKLLIITNGAYGERIVEMAKVLRLALVVYSVPYDKQPSSLEVQALLEKDASITHVAVVHCETTTGILNPIKEIGEVVYSFNKTFIVDAMSSFGGVPMDLSDLHIDFCISSANKCIQGVPGFGFVIAKTNILEKCKGQARSVALDLYSQWEVMKKDGKWRFTSPTHVVAAFAKALEELVEEGGVNARYQRYADNNLLLRSRLSVLGFEAYISEELQSPIITTYLFPHKEFSFEHFYQEMKKAGFVIYPGKLTDVDTFRIGNIGDIYEEDMQALCEVIENYMVVKNNEN.

N6-(pyridoxal phosphate)lysine is present on Lys192.

It belongs to the class-V pyridoxal-phosphate-dependent aminotransferase family. PhnW subfamily. As to quaternary structure, homodimer. It depends on pyridoxal 5'-phosphate as a cofactor.

It carries out the reaction (2-aminoethyl)phosphonate + pyruvate = phosphonoacetaldehyde + L-alanine. Functionally, involved in phosphonate degradation. The polypeptide is 2-aminoethylphosphonate--pyruvate transaminase (phnW) (Lysinibacillus sphaericus (strain C3-41)).